Reading from the N-terminus, the 62-residue chain is Photosystem II reaction center protein Z (62 aa).

2 helical membrane-spanning segments follow: residues 8 to 28 (AVFALIVTSSVLVISVPLVFA) and 41 to 61 (FSGTSLWIGLVFLVAILNSLI).

This sequence belongs to the PsbZ family. PSII is composed of 1 copy each of membrane proteins PsbA, PsbB, PsbC, PsbD, PsbE, PsbF, PsbH, PsbI, PsbJ, PsbK, PsbL, PsbM, PsbT, PsbY, PsbZ, Psb30/Ycf12, at least 3 peripheral proteins of the oxygen-evolving complex and a large number of cofactors. It forms dimeric complexes.

It is found in the plastid. The protein resides in the chloroplast thylakoid membrane. May control the interaction of photosystem II (PSII) cores with the light-harvesting antenna, regulates electron flow through the 2 photosystem reaction centers. PSII is a light-driven water plastoquinone oxidoreductase, using light energy to abstract electrons from H(2)O, generating a proton gradient subsequently used for ATP formation. This is Photosystem II reaction center protein Z from Oryza nivara (Indian wild rice).